The primary structure comprises 802 residues: Cullin-4 (802 aa).

Low complexity-rich tracts occupy residues 1 to 33 (MNFN…NNNN) and 656 to 676 (STSS…ASGS). Disordered regions lie at residues 1–43 (MNFN…SLAG) and 656–686 (STSS…GGAT). The Cullin neddylation domain occupies 734-794 (DRQYQVDAAI…KEYLCRDPEN (61 aa)). K748 is covalently cross-linked (Glycyl lysine isopeptide (Lys-Gly) (interchain with G-Cter in NEDD8)).

The protein belongs to the cullin family. Neddylated. Deneddylated via its interaction with the COP9 signalosome (CSN) complex.

The protein operates within protein modification; protein ubiquitination. In terms of biological role, probable core component of cullin-based SCF-like E3 ubiquitin-protein ligase complexes which mediate the ubiquitination and subsequent proteasomal degradation of target proteins. The E3 ubiquitin-protein ligase activity of the complex is dependent on the neddylation of the cullin subunit. The protein is Cullin-4 (culD) of Dictyostelium discoideum (Social amoeba).